A 287-amino-acid chain; its full sequence is Large ribosomal subunit protein uL2 (287 aa).

A disordered region spans residues 221 to 287 (RGSVMNPCDH…SKRSRGGRDS (67 aa)). Over residues 258 to 287 (KTRKRNKPSNKFVLRKRRKTSKRSRGGRDS) the composition is skewed to basic residues.

This sequence belongs to the universal ribosomal protein uL2 family. Part of the 50S ribosomal subunit. Forms a bridge to the 30S subunit in the 70S ribosome.

Functionally, one of the primary rRNA binding proteins. Required for association of the 30S and 50S subunits to form the 70S ribosome, for tRNA binding and peptide bond formation. It has been suggested to have peptidyltransferase activity; this is somewhat controversial. Makes several contacts with the 16S rRNA in the 70S ribosome. This chain is Large ribosomal subunit protein uL2, found in Synechococcus sp. (strain RCC307).